The sequence spans 165 residues: Regulator of ribonuclease activity A (165 aa).

The protein belongs to the RraA family. In terms of assembly, homotrimer. Binds to both RNA-binding sites in the C-terminal region of Rne and to RhlB.

The protein localises to the cytoplasm. Its function is as follows. Globally modulates RNA abundance by binding to RNase E (Rne) and regulating its endonucleolytic activity. Can modulate Rne action in a substrate-dependent manner by altering the composition of the degradosome. Modulates RNA-binding and helicase activities of the degradosome. The sequence is that of Regulator of ribonuclease activity A from Pseudoalteromonas translucida (strain TAC 125).